A 946-amino-acid polypeptide reads, in one-letter code: Protein RRC1 (946 aa).

Disordered regions lie at residues Met1–Asp29 and Ser41–Val183. Composition is skewed to basic and acidic residues over residues Lys15–Asp29, Asp62–Asp75, and Lys98–Gly147. Positions Thr179 to Ala260 constitute an RRM domain. Residues Val329–Tyr372 form an SURP motif repeat. The region spanning Leu437–Gly582 is the CID domain. The region spanning Leu631–Glu665 is the SAP domain. Disordered regions lie at residues Ala740–Gln797 and Glu836–Arg946. Polar residues predominate over residues Ser757–Gly767. Composition is skewed to basic and acidic residues over residues Ala772–Asp781, Ile854–Ser868, and Ser886–Arg946.

As to quaternary structure, component of the SWAP1-SFPS-RRC1 splicing factor complex which modulates pre-mRNA splicing to promote photomorphogenesis. Interacts with SWAP1 in a light-independent manner. In terms of tissue distribution, expressed in leaves, inflorescence stems, roots, flower buds, open flowers and siliques.

Its subcellular location is the nucleus speckle. Its function is as follows. As a member of the SWAP1-SFPS-RRC1 splicing factor complex, modulates photomorphogenesis by regulating the gene expression and pre-messenger RNA (mRNA) alternative splicing of a large number of genes, including those involved in plant responses to light signaling. SR-like splicing factor required for phytochrome B (phyB) signal transduction and involved in phyB-dependent alternative splicing. In Arabidopsis thaliana (Mouse-ear cress), this protein is Protein RRC1.